The primary structure comprises 60 residues: Small, acid-soluble spore protein 1 (60 aa).

The protein belongs to the alpha/beta-type SASP family. Post-translationally, SASP are degraded in the first minutes of spore germination and provide amino acids for both new protein synthesis and metabolism.

Its function is as follows. SASP are bound to spore DNA. They are double-stranded DNA-binding proteins that cause DNA to change to an a-like conformation. They protect the DNA backbone from chemical and enzymatic cleavage and are thus involved in dormant spore's high resistance to UV light. The sequence is that of Small, acid-soluble spore protein 1 (ssp1) from Clostridium perfringens (strain 13 / Type A).